Here is a 161-residue protein sequence, read N- to C-terminus: Small ribosomal subunit protein uS19 (161 aa).

The segment covering 1 to 19 (MARQKKYSGKGGARKKNKQ) has biased composition (basic residues). The disordered stretch occupies residues 1 to 26 (MARQKKYSGKGGARKKNKQKQSVAPR).

This sequence belongs to the universal ribosomal protein uS19 family.

In terms of biological role, protein S19 forms a complex with S13 that binds strongly to the 16S ribosomal RNA. The protein is Small ribosomal subunit protein uS19 of Methanococcus maripaludis (strain C7 / ATCC BAA-1331).